The chain runs to 252 residues: MNKFEDIRGVAFDLDGTLVDSAPGLAAAVDMALYALELPVAGEERVITWIGNGADVLMERALAWARQERATLRKTMGKPPVDDDIPAEEQVRILRKLFDRYYSEVAEEGTFLFPHVADTLGALQAKGLPLGLVTNKPTPFVAPLLEALDIAKYFSVVIGGDDVQNKKPHPDPLLLVAERMGIAPQQMLFVGDSRNDIQAAKAAGCPSVGLTYGYNYGEAIDLSQPDVIYQSINDLLPALGLPHSENQESKND.

Catalysis depends on D13, which acts as the Nucleophile. D13, D15, and D192 together coordinate Mg(2+).

The protein belongs to the HAD-like hydrolase superfamily. CbbY/CbbZ/Gph/YieH family. In terms of assembly, monomer. Mg(2+) serves as cofactor. Requires chloride as cofactor.

The enzyme catalyses 2-phosphoglycolate + H2O = glycolate + phosphate. It participates in organic acid metabolism; glycolate biosynthesis; glycolate from 2-phosphoglycolate: step 1/1. In terms of biological role, specifically catalyzes the dephosphorylation of 2-phosphoglycolate. Is involved in the dissimilation of the intracellular 2-phosphoglycolate formed during the DNA repair of 3'-phosphoglycolate ends, a major class of DNA lesions induced by oxidative stress. This chain is Phosphoglycolate phosphatase, found in Shigella boydii serotype 4 (strain Sb227).